The primary structure comprises 187 residues: Ribosome maturation factor RimM (187 aa).

Positions 111–187 constitute a PRC barrel domain; the sequence is KDEYYWVDLI…RILVDWQADF (77 aa).

This sequence belongs to the RimM family. Binds ribosomal protein uS19.

The protein localises to the cytoplasm. Its function is as follows. An accessory protein needed during the final step in the assembly of 30S ribosomal subunit, possibly for assembly of the head region. Essential for efficient processing of 16S rRNA. May be needed both before and after RbfA during the maturation of 16S rRNA. It has affinity for free ribosomal 30S subunits but not for 70S ribosomes. The chain is Ribosome maturation factor RimM from Albidiferax ferrireducens (strain ATCC BAA-621 / DSM 15236 / T118) (Rhodoferax ferrireducens).